A 422-amino-acid chain; its full sequence is p-hydroxyphenylacetate 3-hydroxylase, oxygenase component (422 aa).

Trp-112 contacts FMN. Residues His-120 and Ser-146 each contribute to the substrate site. Residues 146-148 (SSI) and 169-171 (WSS) contribute to the FMN site. 263–266 (RPYF) serves as a coordination point for substrate. FMN-binding positions include Arg-292, Tyr-296, 374 to 375 (AT), and 396 to 397 (HA). Substrate is bound at residue Tyr-296.

Belongs to the HpaH/HsaA monooxygenase family. As to quaternary structure, homotetramer. The p-hydroxyphenylacetate 3-hydroxylase (HpaH) is composed of an oxygenase component C2 and a reductase component C1.

The enzyme catalyses 4-hydroxyphenylacetate + FMNH2 + O2 = 3,4-dihydroxyphenylacetate + FMN + H2O + H(+). The catalysed reaction is 4-hydroxyphenylacetate + FADH2 + O2 = 3,4-dihydroxyphenylacetate + FAD + H2O + H(+). It participates in aromatic compound metabolism; 4-hydroxyphenylacetate degradation; pyruvate and succinate semialdehyde from 4-hydroxyphenylacetate: step 1/7. Inhibited by flavin concentrations greater than 15 uM. Also inhibited by excess p-hydroxyphenylacetate (HPA). In terms of biological role, oxygenase component of a two-component system that utilizes reduced FMN (FMNH2) supplied by the reductase component to catalyze the hydroxylation of 4-hydroxyphenylacetic acid, leading to the production of 3,4-dihydroxyphenylacetate (3,4-DHPA). Also utilizes other reduced flavins such as FADH2 and reduced riboflavin to a lesser extent. Only the compounds with a hydroxyl group in the para (p-) position can be hydroxylated. May also oxidize phenol to catechol, and hydroxylate other phenol derivatives. The sequence is that of p-hydroxyphenylacetate 3-hydroxylase, oxygenase component from Acinetobacter baumannii.